We begin with the raw amino-acid sequence, 158 residues long: Small ribosomal subunit protein uS9 (158 aa).

This sequence belongs to the universal ribosomal protein uS9 family.

This chain is Small ribosomal subunit protein uS9, found in Brucella melitensis biotype 1 (strain ATCC 23456 / CCUG 17765 / NCTC 10094 / 16M).